The sequence spans 262 residues: 7alpha-hydroxysteroid dehydrogenase (262 aa).

NADP(+)-binding positions include 13-18, R38, 63-64, and N90; these read SSTRGI and NA. Residues T145 and Y158 each coordinate taurochenodeoxycholate. Residues Y158, K162, and 191–195 contribute to the NADP(+) site; that span reads IGTRA. The active-site Proton acceptor is Y158.

This sequence belongs to the short-chain dehydrogenases/reductases (SDR) family. As to quaternary structure, homotetramer. A dynamic equilibrium between dimers and tetramers seems to exist.

It catalyses the reaction cholate + NADP(+) = 3alpha,12alpha-dihydroxy-7-oxo-5beta-cholanate + NADPH + H(+). The catalysed reaction is chenodeoxycholate + NADP(+) = 7-oxolithocholate + NADPH + H(+). It carries out the reaction 3alpha,7alpha-dihydroxy-12-oxo-5beta-cholanate + NADP(+) = 7,12-dioxo-lithocholate + NADPH + H(+). The enzyme catalyses 7alpha-hydroxy-3,12-dioxo-5beta-cholanate + NADP(+) = dehydrocholate + NADPH + H(+). It catalyses the reaction glycochenodeoxycholate + NADP(+) = 7-oxoglycolithocholate + NADPH + H(+). The catalysed reaction is taurochenodeoxycholate + NADP(+) = 7-oxotaurolithocholate + NADPH + H(+). Activated by metal ions such as Mg(2+), Na(+) and K(+). 7alpha-hydroxysteroid dehydrogenase that catalyzes the NADP(+)-dependent oxidation of the 7alpha-hydroxy group of 7alpha-hydroxysteroids, such as cholate, chenodeoxycholate, glycochenodeoxycholate and taurochenodeoxycholate, to the corresponding 7-oxosteroids. Is also able to catalyze the reverse reduction reactions. Together with 7beta-HSDH encoded in the adjacent gene, is likely involved in the epimerization of the hydroxy group at C-7 of primary bile acids through 7-keto bile acid intermediates. The sequence is that of 7alpha-hydroxysteroid dehydrogenase from Clostridium sardiniense (Clostridium absonum).